We begin with the raw amino-acid sequence, 410 residues long: ORC1-type DNA replication protein 2 (410 aa).

Residues 60–65 (GIGKTT), Y213, and R225 each bind ATP.

It belongs to the CDC6/cdc18 family.

Functionally, involved in regulation of DNA replication. Binds DNA. The protein is ORC1-type DNA replication protein 2 (orc2) of Aeropyrum pernix (strain ATCC 700893 / DSM 11879 / JCM 9820 / NBRC 100138 / K1).